The sequence spans 114 residues: C-X-C motif chemokine 5 (114 aa).

A signal peptide spans 1 to 36; that stretch reads MSLLSSRAARVPGPSSSLCALLVLLLLLTQPGPIAS. 2 cysteine pairs are disulfide-bonded: cysteine 49-cysteine 75 and cysteine 51-cysteine 91.

It belongs to the intercrine alpha (chemokine CxC) family. As to quaternary structure, monomer. Homodimer. In terms of processing, N-terminal processed forms ENA-78(8-78) and ENA-78(9-78) are produced by proteolytic cleavage after secretion from peripheral blood monocytes.

It is found in the secreted. Involved in neutrophil activation. In vitro, ENA-78(8-78) and ENA-78(9-78) show a threefold higher chemotactic activity for neutrophil granulocytes. The protein is C-X-C motif chemokine 5 (CXCL5) of Homo sapiens (Human).